The following is a 453-amino-acid chain: tRNA modification GTPase MnmE (453 aa).

Arginine 22, glutamate 79, and lysine 119 together coordinate (6S)-5-formyl-5,6,7,8-tetrahydrofolate. One can recognise a TrmE-type G domain in the interval 215-376 (GMKVVIAGRP…LKQHLKSLMG (162 aa)). Asparagine 225 is a binding site for K(+). GTP is bound by residues 225–230 (NAGKSS), 244–250 (TEIAGTT), 269–272 (DTAG), and 334–337 (NKAD). Serine 229 contacts Mg(2+). K(+) is bound by residues threonine 244, isoleucine 246, and threonine 249. Position 250 (threonine 250) interacts with Mg(2+). Lysine 453 contributes to the (6S)-5-formyl-5,6,7,8-tetrahydrofolate binding site.

The protein belongs to the TRAFAC class TrmE-Era-EngA-EngB-Septin-like GTPase superfamily. TrmE GTPase family. As to quaternary structure, homodimer. Heterotetramer of two MnmE and two MnmG subunits. K(+) is required as a cofactor.

Its subcellular location is the cytoplasm. Functionally, exhibits a very high intrinsic GTPase hydrolysis rate. Involved in the addition of a carboxymethylaminomethyl (cmnm) group at the wobble position (U34) of certain tRNAs, forming tRNA-cmnm(5)s(2)U34. This Shewanella oneidensis (strain ATCC 700550 / JCM 31522 / CIP 106686 / LMG 19005 / NCIMB 14063 / MR-1) protein is tRNA modification GTPase MnmE.